Here is a 223-residue protein sequence, read N- to C-terminus: Putative synaptogyrin-2 like protein (223 aa).

Methionine 1 is subject to N-acetylmethionine. Serine 3 bears the Phosphoserine mark. Residues 20-170 (FLTQPQVVAR…LASLTYQRYK (151 aa)) form the MARVEL domain. The next 4 membrane-spanning stretches (helical) occupy residues 26 to 46 (VVAR…IYGE), 71 to 91 (GSAI…DAYF), 104 to 124 (VIGD…GFCF), and 146 to 166 (AAIT…SLTY). The disordered stretch occupies residues 197-223 (ASVDNYQQPPFTQNAETTEGYQPPPVY). Over residues 200–216 (DNYQQPPFTQNAETTEG) the composition is skewed to polar residues.

The protein belongs to the synaptogyrin family.

Its subcellular location is the membrane. The polypeptide is Putative synaptogyrin-2 like protein (Homo sapiens (Human)).